Here is a 309-residue protein sequence, read N- to C-terminus: L-arabinose 1-dehydrogenase (NAD(P)(+)) (309 aa).

NADP(+) is bound by residues I15 and 37–38 (SR). K91 functions as the Proton donor in the catalytic mechanism. D169 provides a ligand contact to NADP(+).

This sequence belongs to the Gfo/Idh/MocA family. In terms of assembly, monomer.

It catalyses the reaction alpha-L-arabinopyanose + NAD(+) = L-arabinono-1,4-lactone + NADH + H(+). It carries out the reaction alpha-L-arabinopyanose + NADP(+) = L-arabinono-1,4-lactone + NADPH + H(+). The enzyme catalyses D-galactose + NAD(+) = D-galactono-1,4-lactone + NADH + H(+). The catalysed reaction is D-galactose + NADP(+) = D-galactono-1,5-lactone + NADPH + H(+). Its pathway is carbohydrate degradation; L-arabinose degradation via L-arabinono-1,4-lactone pathway. Its function is as follows. Catalyzes the NAD(P)(+)-dependent conversion of L-arabinose to L-arabino-gamma-lactone. Is involved in a degradation pathway of L-arabinose that allows A.brasilense to grow on L-arabinose as a sole carbon source. Prefers NADP(+) to NAD(+) as electron acceptor. Displays high catalytic efficiency for both L-arabinose and D-galactose in vitro. However, the enzyme appears to be involved in the metabolism of L-arabinose but not D-galactose in vivo. To a lesser extent, is also active on D-talose and D-xylose as substrates in vitro, but not with D-arabinose, D-glucose, D-ribose, L-xylose, L-mannose, L-lyxose, and D-fructose. The sequence is that of L-arabinose 1-dehydrogenase (NAD(P)(+)) (araA) from Azospirillum brasilense.